Here is a 230-residue protein sequence, read N- to C-terminus: Cytidylate kinase (230 aa).

Position 12–20 (12–20) interacts with ATP; it reads GPSGTGKST.

It belongs to the cytidylate kinase family. Type 1 subfamily.

It is found in the cytoplasm. The catalysed reaction is CMP + ATP = CDP + ADP. It carries out the reaction dCMP + ATP = dCDP + ADP. The protein is Cytidylate kinase of Corynebacterium glutamicum (strain ATCC 13032 / DSM 20300 / JCM 1318 / BCRC 11384 / CCUG 27702 / LMG 3730 / NBRC 12168 / NCIMB 10025 / NRRL B-2784 / 534).